Reading from the N-terminus, the 389-residue chain is Chalcone synthase 4 (389 aa).

Cys-164 is an active-site residue.

The protein belongs to the thiolase-like superfamily. Chalcone/stilbene synthases family.

It carries out the reaction (E)-4-coumaroyl-CoA + 3 malonyl-CoA + 3 H(+) = 2',4,4',6'-tetrahydroxychalcone + 3 CO2 + 4 CoA. Its pathway is secondary metabolite biosynthesis; flavonoid biosynthesis. Its function is as follows. The primary product of this enzyme is 4,2',4',6'-tetrahydroxychalcone (also termed naringenin-chalcone or chalcone) which can under specific conditions spontaneously isomerize into naringenin. The protein is Chalcone synthase 4 (CHS4) of Pisum sativum (Garden pea).